Reading from the N-terminus, the 293-residue chain is Ribosomal RNA small subunit methyltransferase A (293 aa).

Positions 29, 31, 56, 77, 102, and 127 each coordinate S-adenosyl-L-methionine.

This sequence belongs to the class I-like SAM-binding methyltransferase superfamily. rRNA adenine N(6)-methyltransferase family. RsmA subfamily.

The protein localises to the cytoplasm. The enzyme catalyses adenosine(1518)/adenosine(1519) in 16S rRNA + 4 S-adenosyl-L-methionine = N(6)-dimethyladenosine(1518)/N(6)-dimethyladenosine(1519) in 16S rRNA + 4 S-adenosyl-L-homocysteine + 4 H(+). Functionally, specifically dimethylates two adjacent adenosines (A1518 and A1519) in the loop of a conserved hairpin near the 3'-end of 16S rRNA in the 30S particle. May play a critical role in biogenesis of 30S subunits. This chain is Ribosomal RNA small subunit methyltransferase A, found in Geobacillus kaustophilus (strain HTA426).